The following is a 562-amino-acid chain: Dihydroxy-acid dehydratase (562 aa).

Mg(2+) is bound at residue D80. [2Fe-2S] cluster is bound at residue C121. Mg(2+) contacts are provided by D122 and K123. The residue at position 123 (K123) is an N6-carboxylysine. Residue C194 participates in [2Fe-2S] cluster binding. E446 provides a ligand contact to Mg(2+). S472 acts as the Proton acceptor in catalysis.

This sequence belongs to the IlvD/Edd family. As to quaternary structure, homodimer. Requires [2Fe-2S] cluster as cofactor. It depends on Mg(2+) as a cofactor.

The enzyme catalyses (2R)-2,3-dihydroxy-3-methylbutanoate = 3-methyl-2-oxobutanoate + H2O. It catalyses the reaction (2R,3R)-2,3-dihydroxy-3-methylpentanoate = (S)-3-methyl-2-oxopentanoate + H2O. Its pathway is amino-acid biosynthesis; L-isoleucine biosynthesis; L-isoleucine from 2-oxobutanoate: step 3/4. It functions in the pathway amino-acid biosynthesis; L-valine biosynthesis; L-valine from pyruvate: step 3/4. Functions in the biosynthesis of branched-chain amino acids. Catalyzes the dehydration of (2R,3R)-2,3-dihydroxy-3-methylpentanoate (2,3-dihydroxy-3-methylvalerate) into 2-oxo-3-methylpentanoate (2-oxo-3-methylvalerate) and of (2R)-2,3-dihydroxy-3-methylbutanoate (2,3-dihydroxyisovalerate) into 2-oxo-3-methylbutanoate (2-oxoisovalerate), the penultimate precursor to L-isoleucine and L-valine, respectively. In Staphylococcus aureus (strain Mu50 / ATCC 700699), this protein is Dihydroxy-acid dehydratase.